Reading from the N-terminus, the 960-residue chain is Endosome/lysosome-associated apoptosis and autophagy regulator family member 2 (960 aa).

Positions 1–26 (MLFLRPGPARGRGRGRPARAPHSGLS) are disordered. Residues 1–44 (MLFLRPGPARGRGRGRPARAPHSGLSPPWSPAWICCWALAGCQA) form the signal peptide. Residues 45–860 (AWAGAGDLPS…TCETVDFWLK (816 aa)) lie on the Extracellular side of the membrane. Asparagine 171 carries an N-linked (GlcNAc...) asparagine glycan. Intrachain disulfides connect cysteine 295/cysteine 312, cysteine 325/cysteine 348, and cysteine 328/cysteine 360. Residues asparagine 407 and asparagine 622 are each glycosylated (N-linked (GlcNAc...) asparagine). Positions 597–808 (PTCPYIRSMA…LWESVEACPL (212 aa)) constitute an MRH domain. Intrachain disulfides connect cysteine 599/cysteine 651, cysteine 661/cysteine 689, cysteine 758/cysteine 794, and cysteine 770/cysteine 806. A helical transmembrane segment spans residues 861–881 (VGAGVGAFTAVLLVALTCYFW). At 882–960 (KKNQKLEYKY…QLKSSRSPNI (79 aa)) the chain is on the cytoplasmic side. Phosphoserine is present on serine 949.

This sequence belongs to the ELAPOR family.

The protein resides in the cell membrane. In terms of biological role, functions as a regulator of the BMP signaling pathway and may be involved in epidermal differentiation. This Bos taurus (Bovine) protein is Endosome/lysosome-associated apoptosis and autophagy regulator family member 2.